The following is a 377-amino-acid chain: Glutamate 5-kinase (377 aa).

ATP is bound at residue Lys18. Residues Ser59, Asp146, and Asn158 each coordinate substrate. Residues 178-179 (SD) and 222-228 (TGGMATK) each bind ATP. One can recognise a PUA domain in the interval 286-363 (QGWVTVDAGA…DAIEAELGFT (78 aa)).

Belongs to the glutamate 5-kinase family.

It localises to the cytoplasm. The catalysed reaction is L-glutamate + ATP = L-glutamyl 5-phosphate + ADP. Its pathway is amino-acid biosynthesis; L-proline biosynthesis; L-glutamate 5-semialdehyde from L-glutamate: step 1/2. In terms of biological role, catalyzes the transfer of a phosphate group to glutamate to form L-glutamate 5-phosphate. This Caulobacter vibrioides (strain ATCC 19089 / CIP 103742 / CB 15) (Caulobacter crescentus) protein is Glutamate 5-kinase.